The sequence spans 134 residues: Large ribosomal subunit protein eL32 (134 aa).

This sequence belongs to the eukaryotic ribosomal protein eL32 family.

This chain is Large ribosomal subunit protein eL32 (RpL32), found in Drosophila acanthoptera (Fruit fly).